The chain runs to 230 residues: Zein-alpha 19A2 (230 aa).

The first 18 residues, 1 to 18 (KIFCFLMLLGLSASAATA), serve as a signal peptide directing secretion.

This sequence belongs to the zein family.

Zeins are major seed storage proteins. The protein is Zein-alpha 19A2 of Zea mays (Maize).